Reading from the N-terminus, the 94-residue chain is DASH complex subunit DAD5 (94 aa).

Low complexity predominate over residues 1–20 (MRRSTIVPTSRTSSSSPSPS). Residues 1–25 (MRRSTIVPTSRTSSSSPSPSQMKSF) form a disordered region.

This sequence belongs to the DASH complex HSK3 family. In terms of assembly, component of the DASH complex consisting of ask1, dad1, dad2, dad3, dad4, dam1, duo1, dad5, spc19 and spc34, with a stoichiometry of one copy of each subunit per complex. Multiple DASH complexes oligomerize to form a ring that encircles spindle microtubules and organizes the rod-like NDC80 complexes of the outer kinetochore. DASH complex oligomerization strengthens microtubule attachments. On cytoplasmic microtubules, DASH complexes appear to form patches instead of rings.

Its subcellular location is the nucleus. The protein resides in the cytoplasm. It localises to the cytoskeleton. It is found in the spindle. The protein localises to the chromosome. Its subcellular location is the centromere. The protein resides in the kinetochore. Component of the DASH complex that connects microtubules with kinetochores and couples microtubule depolymerisation to chromosome movement; it is involved in retrieving kinetochores to the spindle poles before their re-orientation on the spindle in early mitosis and allows microtubule depolymerization to pull chromosomes apart and resist detachment during anaphase. Kinetochores, consisting of a centromere-associated inner segment and a microtubule-contacting outer segment, play a crucial role in chromosome segregation by mediating the physical connection between centromeric DNA and microtubules. Kinetochores also serve as an input point for the spindle assembly checkpoint, which delays anaphase until all chromosomes have bioriented on the mitotic spindle. The DASH complex mediates bipolar kinetochore-microtubule attachments and facilitates the formation of additional interactions between outer kinetochore components and spindle microtubules. During chromosome movement along the microtubule, it is required both for the sliding of kinetochores along the lateral side of the microtubule and also for microtubule end-on pulling on the kinetochore. Modulates cytoplasmic microtubule dynamics by tracking the plus-end of shortening microtubules and slowing their depolymerization. The polypeptide is DASH complex subunit DAD5 (Schizosaccharomyces pombe (strain 972 / ATCC 24843) (Fission yeast)).